The sequence spans 357 residues: MQFGRTTLSKFVIENTRASHGELGALLIDVAAAVKTISAMVAKGALAGHHGALDSTNVQGEVQKKLDVLTNDAILRHCEWGGQLAGMASEEMDDPYPIPAEYPRGRYLLVFDPLDGSSNSDVNVSVGTIFSIFSRRAAGDAELGDYLRPGSEQVAAGYAIYGPSTMMVLTLGNGTHGFTLDRESGNFILTHANIRVPEDTREFAINTSNERFWEPPVQRYVSECKAGKSGVRGEDFNTRWIASMVAEVHRILIRGGIFMYPKDSKDPSKPGRLRLLYEANPMAMLIEQAGGAASTGRQRILDVVPDSLHQRAPVILGSKNEVERLARYHHEYDTGADRPFVSPLFSERSLFRDESRA.

Mg(2+) contacts are provided by E90, D112, L114, and D115. Substrate-binding positions include 115–118 and N206; that span reads DGSS. Residue E278 participates in Mg(2+) binding.

It belongs to the FBPase class 1 family. Homotetramer. The cofactor is Mg(2+).

The protein resides in the cytoplasm. It catalyses the reaction beta-D-fructose 1,6-bisphosphate + H2O = beta-D-fructose 6-phosphate + phosphate. The protein operates within carbohydrate biosynthesis; gluconeogenesis. This chain is Fructose-1,6-bisphosphatase class 1 2, found in Dechloromonas aromatica (strain RCB).